The sequence spans 316 residues: Transaldolase (316 aa).

Lysine 132 acts as the Schiff-base intermediate with substrate in catalysis.

Belongs to the transaldolase family. Type 1 subfamily. Homodimer.

The protein resides in the cytoplasm. The catalysed reaction is D-sedoheptulose 7-phosphate + D-glyceraldehyde 3-phosphate = D-erythrose 4-phosphate + beta-D-fructose 6-phosphate. The protein operates within carbohydrate degradation; pentose phosphate pathway; D-glyceraldehyde 3-phosphate and beta-D-fructose 6-phosphate from D-ribose 5-phosphate and D-xylulose 5-phosphate (non-oxidative stage): step 2/3. In terms of biological role, transaldolase is important for the balance of metabolites in the pentose-phosphate pathway. In Vibrio campbellii (strain ATCC BAA-1116), this protein is Transaldolase.